The primary structure comprises 446 residues: Packaging protein 1 (446 aa).

The tract at residues 1-72 (MEEKAGLRHL…SQVSKSKKQR (72 aa)) is disordered. A compositionally biased stretch (polar residues) spans 10-21 (LQNQQNEPSQDP). A compositionally biased stretch (basic and acidic residues) spans 32–43 (HSDRNHLNKEAE). An ATP-binding site is contributed by 170–177 (GPTGCGKS). Residues 439 to 446 (RYYHSKKK) are DNA-binding.

This sequence belongs to the adenoviridae packaging protein 1 family. In terms of assembly, homodimer. Part of a genome packaging complex composed of packaging proteins 1, 2 and 3; this complex specifically binds to the packaging sequence on the left end of viral genomic DNA and performs packaging of the viral genome. Interacts with protein 33K.

It localises to the virion. It is found in the host nucleus. The protein resides in the host nucleoplasm. Its subcellular location is the host nucleolus. In terms of biological role, component of the packaging machinery which encapsidates the viral DNA into preformed capsids and transcriptional activator of the viral major late promoter (MLP). Binds, along with packaging proteins 2 and 3, to the specific packaging sequence on the left end of viral genomic DNA and displays ATPase activity thereby providing the power stroke of the packaging machinery. The activity of packaging protein IVa2 is stimulated by protein 33K which acts as a terminase. May be the protein that pumps DNA into the capsid powered by ATP hydrolysis. Specifically binds to the 5'-CG-3' nucleotides of the repeats making up the packaging sequence. Component of the DEF-A and DEF-B transcription factors that bind downstream elements of the major late promoter (MLP), and stimulate transcription from the MLP after initiation of viral DNA replication. DEF-A is a heterodimer packaging proteins 1 and 2 and DEF-B is a homodimer of packaging protein 1. This is Packaging protein 1 from Canine adenovirus serotype 1 (strain CLL) (CAdV-1).